The following is a 299-amino-acid chain: Acetylglutamate kinase (299 aa).

Substrate is bound by residues 64–65 (GG), Arg-86, and Asn-197.

The protein belongs to the acetylglutamate kinase family. ArgB subfamily.

The protein localises to the cytoplasm. The enzyme catalyses N-acetyl-L-glutamate + ATP = N-acetyl-L-glutamyl 5-phosphate + ADP. It participates in amino-acid biosynthesis; L-arginine biosynthesis; N(2)-acetyl-L-ornithine from L-glutamate: step 2/4. Catalyzes the ATP-dependent phosphorylation of N-acetyl-L-glutamate. In Sulfurihydrogenibium sp. (strain YO3AOP1), this protein is Acetylglutamate kinase.